The primary structure comprises 268 residues: Interleukin-1 alpha (268 aa).

Positions 1 to 112 (MAKVPDLFED…DTEEEIIKPR (112 aa)) are excised as a propeptide. Lys-82 carries the N6-acetyllysine modification. The nuclear localization signal (NLS) stretch occupies residues 82–86 (KKRRL). Residue Ser-87 is modified to Phosphoserine. Asn-102 and Asn-141 each carry an N-linked (GlcNAc...) asparagine glycan.

Belongs to the IL-1 family. In terms of assembly, monomer. Interacts with TMED10; the interaction mediates the translocation from the cytoplasm into the ERGIC (endoplasmic reticulum-Golgi intermediate compartment) and thereby secretion. Interacts with IL1R1. Interacts with S100A13; this interaction is the first step in the export of IL1A, followed by direct translocation of this complex across the plasma membrane. Acetylated within its nuclear localization sequence, which impacts subcellular localization. Post-translationally, proteolytic processed by CAPN1 in a calcium-dependent manner. Cleavage from 31 kDa precursor to 18 kDa biologically active molecules. In terms of processing, phosphorylated. Phosphorylation greatly enhances susceptibility to digestion and promotes the conversion of pre-IL1A alpha to the biologically active IL1A.

Its subcellular location is the nucleus. The protein resides in the cytoplasm. It is found in the secreted. Cytokine constitutively present intracellularly in nearly all resting non-hematopoietic cells that plays an important role in inflammation and bridges the innate and adaptive immune systems. After binding to its receptor IL1R1 together with its accessory protein IL1RAP, forms the high affinity interleukin-1 receptor complex. Signaling involves the recruitment of adapter molecules such as MYD88, IRAK1 or IRAK4. In turn, mediates the activation of NF-kappa-B and the three MAPK pathways p38, p42/p44 and JNK pathways. Within the cell, acts as an alarmin and cell death results in its liberation in the extracellular space after disruption of the cell membrane to induce inflammation and alert the host to injury or damage. In addition to its role as a danger signal, which occurs when the cytokine is passively released by cell necrosis, directly senses DNA damage and acts as signal for genotoxic stress without loss of cell integrity. This Lama glama (Llama) protein is Interleukin-1 alpha (IL1A).